The following is a 485-amino-acid chain: Inosine-5'-monophosphate dehydrogenase (485 aa).

2 consecutive CBS domains span residues 99–154 (IVED…LVKE) and 156–215 (MTKD…VRDE). Residues Asp247 and 294–296 (GIG) each bind NAD(+). K(+) contacts are provided by Gly296 and Gly298. Ser299 lines the IMP pocket. A K(+)-binding site is contributed by Cys301. The active-site Thioimidate intermediate is Cys301. IMP-binding positions include 334–336 (DGG), 357–358 (GN), and 381–385 (YRGMG). Catalysis depends on Arg397, which acts as the Proton acceptor. An IMP-binding site is contributed by Glu412. Glu466, Ser467, and His468 together coordinate K(+).

Belongs to the IMPDH/GMPR family. Homotetramer. Requires K(+) as cofactor.

It carries out the reaction IMP + NAD(+) + H2O = XMP + NADH + H(+). The protein operates within purine metabolism; XMP biosynthesis via de novo pathway; XMP from IMP: step 1/1. Its activity is regulated as follows. Mycophenolic acid (MPA) is a non-competitive inhibitor that prevents formation of the closed enzyme conformation by binding to the same site as the amobile flap. In contrast, mizoribine monophosphate (MZP) is a competitive inhibitor that induces the closed conformation. MPA is a potent inhibitor of mammalian IMPDHs but a poor inhibitor of the bacterial enzymes. MZP is a more potent inhibitor of bacterial IMPDH. Catalyzes the conversion of inosine 5'-phosphate (IMP) to xanthosine 5'-phosphate (XMP), the first committed and rate-limiting step in the de novo synthesis of guanine nucleotides, and therefore plays an important role in the regulation of cell growth. The polypeptide is Inosine-5'-monophosphate dehydrogenase (Pyrococcus abyssi (strain GE5 / Orsay)).